A 179-amino-acid chain; its full sequence is Large ribosomal subunit protein uL6 (179 aa).

This sequence belongs to the universal ribosomal protein uL6 family. In terms of assembly, part of the 50S ribosomal subunit.

Its function is as follows. This protein binds to the 23S rRNA, and is important in its secondary structure. It is located near the subunit interface in the base of the L7/L12 stalk, and near the tRNA binding site of the peptidyltransferase center. The protein is Large ribosomal subunit protein uL6 of Chlorobium limicola (strain DSM 245 / NBRC 103803 / 6330).